The following is a 545-amino-acid chain: Thermosome subunit beta (545 aa).

It belongs to the TCP-1 chaperonin family. In terms of assembly, forms a Heterooligomeric complex of two stacked eight-membered rings.

Molecular chaperone; binds unfolded polypeptides in vitro, and has a weak ATPase activity. The sequence is that of Thermosome subunit beta (thsB) from Thermococcus sp. (strain KS-8).